Reading from the N-terminus, the 126-residue chain is Fluoride-specific ion channel FluC (126 aa).

4 helical membrane passes run 4-24 (SLLS…FVGL), 35-55 (LGTI…IALF), 67-87 (FVIT…AEVI), and 97-117 (FAIA…VLGL). Na(+) contacts are provided by Gly74 and Thr77.

Belongs to the fluoride channel Fluc/FEX (TC 1.A.43) family.

It localises to the cell inner membrane. The enzyme catalyses fluoride(in) = fluoride(out). Na(+) is not transported, but it plays an essential structural role and its presence is essential for fluoride channel function. In terms of biological role, fluoride-specific ion channel. Important for reducing fluoride concentration in the cell, thus reducing its toxicity. This chain is Fluoride-specific ion channel FluC, found in Acinetobacter baylyi (strain ATCC 33305 / BD413 / ADP1).